A 138-amino-acid chain; its full sequence is Large ribosomal subunit protein bL19 (138 aa).

The protein belongs to the bacterial ribosomal protein bL19 family.

Its function is as follows. This protein is located at the 30S-50S ribosomal subunit interface and may play a role in the structure and function of the aminoacyl-tRNA binding site. The sequence is that of Large ribosomal subunit protein bL19 from Rickettsia felis (strain ATCC VR-1525 / URRWXCal2) (Rickettsia azadi).